The sequence spans 164 residues: ATP synthase subunit b (164 aa).

The helical transmembrane segment at 10 to 32 (SAAMLMLFVLMVYFLNKFLYTPF) threads the bilayer.

This sequence belongs to the ATPase B chain family. As to quaternary structure, F-type ATPases have 2 components, F(1) - the catalytic core - and F(0) - the membrane proton channel. F(1) has five subunits: alpha(3), beta(3), gamma(1), delta(1), epsilon(1). F(0) has three main subunits: a(1), b(2) and c(10-14). The alpha and beta chains form an alternating ring which encloses part of the gamma chain. F(1) is attached to F(0) by a central stalk formed by the gamma and epsilon chains, while a peripheral stalk is formed by the delta and b chains.

Its subcellular location is the cell inner membrane. In terms of biological role, f(1)F(0) ATP synthase produces ATP from ADP in the presence of a proton or sodium gradient. F-type ATPases consist of two structural domains, F(1) containing the extramembraneous catalytic core and F(0) containing the membrane proton channel, linked together by a central stalk and a peripheral stalk. During catalysis, ATP synthesis in the catalytic domain of F(1) is coupled via a rotary mechanism of the central stalk subunits to proton translocation. Component of the F(0) channel, it forms part of the peripheral stalk, linking F(1) to F(0). This Thermotoga maritima (strain ATCC 43589 / DSM 3109 / JCM 10099 / NBRC 100826 / MSB8) protein is ATP synthase subunit b.